A 139-amino-acid polypeptide reads, in one-letter code: 2S seed storage albumin protein (139 aa).

Positions 1–15 are cleaved as a signal peptide; that stretch reads AALLVALLFVANAAA. IgE-binding regions lie at residues 16-30, 29-34, 64-78, 65-73, 95-103, 99-111, 102-114, 105-117, 112-126, 125-136, and 125-139; these read FRTT…EDID, IDNPRR, GYDE…RQCC, YDEDNQRQH, QVVRRQQQQ, RQQQ…GEEM, QQQG…MEEM, GLRG…MVQS, EEMV…NECG, CGISSQRCEIRR, and CGIS…RSWF. 2 consecutive propeptides follow at residues 16–31 and 58–71; these read FRTT…DIDN and QQSR…DNQR. 4 cysteine pairs are disulfide-bonded: cysteine 39–cysteine 88, cysteine 52–cysteine 77, cysteine 78–cysteine 125, and cysteine 90–cysteine 132. Residues 104–115 form an immunodominant epitope. IgE-binding; binds to IgE in 75% of the 20 walnut-allergic patients tested region; that stretch reads QGLRGEEMEEMV. The tract at residues 107 to 110 is minimally required for IgE-binding by the immunodominant epitope; that stretch reads RGEE. The propeptide occupies 136–139; it reads RSWF.

It belongs to the 2S seed storage albumins family. In terms of assembly, the mature protein consists of a small chain and a large chain linked by disulfide bonds. As to expression, expressed in seed (at protein level). Expressed in the peel of mature seed.

Its function is as follows. Seed storage protein. This Juglans regia (English walnut) protein is 2S seed storage albumin protein.